Here is a 509-residue protein sequence, read N- to C-terminus: Cobyric acid synthase (509 aa).

Positions Glu-262 to Trp-459 constitute a GATase cobBQ-type domain. Residue Cys-343 is the Nucleophile of the active site. Residue His-451 is part of the active site.

It belongs to the CobB/CobQ family. CobQ subfamily.

The protein operates within cofactor biosynthesis; adenosylcobalamin biosynthesis. In terms of biological role, catalyzes amidations at positions B, D, E, and G on adenosylcobyrinic A,C-diamide. NH(2) groups are provided by glutamine, and one molecule of ATP is hydrogenolyzed for each amidation. The polypeptide is Cobyric acid synthase (Prochlorococcus marinus (strain MIT 9215)).